Consider the following 366-residue polypeptide: DNA integrity scanning protein DisA (366 aa).

Positions 21-159 constitute a DAC domain; that stretch reads VHTLKGTLQR…EGKSHMLEQP (139 aa). Residues Gly88, Leu106, and 119–123 contribute to the ATP site; that span reads TRHRS.

It belongs to the DisA family. In terms of assembly, homooctamer. Mg(2+) is required as a cofactor.

The catalysed reaction is 2 ATP = 3',3'-c-di-AMP + 2 diphosphate. In terms of biological role, participates in a DNA-damage check-point. DisA forms globular foci that rapidly scan along the chromosomes searching for lesions. Also has diadenylate cyclase activity, catalyzing the condensation of 2 ATP molecules into cyclic di-AMP (c-di-AMP). c-di-AMP likely acts as a signaling molecule that may couple DNA integrity with a cellular process. The polypeptide is DNA integrity scanning protein DisA (Corynebacterium glutamicum (strain ATCC 13032 / DSM 20300 / JCM 1318 / BCRC 11384 / CCUG 27702 / LMG 3730 / NBRC 12168 / NCIMB 10025 / NRRL B-2784 / 534)).